We begin with the raw amino-acid sequence, 243 residues long: ATP synthase subunit a, chloroplastic (243 aa).

The next 5 helical transmembrane spans lie at 32–52 (AQVL…ALIA), 91–111 (IPFV…GALI), 130–150 (INTT…AGLN), 195–215 (LVVA…MMFL), and 216–236 (GLFT…AYIG).

Belongs to the ATPase A chain family. In terms of assembly, F-type ATPases have 2 components, CF(1) - the catalytic core - and CF(0) - the membrane proton channel. CF(1) has five subunits: alpha(3), beta(3), gamma(1), delta(1), epsilon(1). CF(0) has four main subunits: a, b, b' and c.

It is found in the plastid. The protein localises to the chloroplast thylakoid membrane. In terms of biological role, key component of the proton channel; it plays a direct role in the translocation of protons across the membrane. This is ATP synthase subunit a, chloroplastic from Chaetosphaeridium globosum (Charophycean green alga).